The chain runs to 286 residues: L-ribulose 3-epimerase (286 aa).

His12, Ser69, Glu152, and Glu158 together coordinate D-allulose. D-fructose contacts are provided by His12, Ser69, Glu152, and Glu158. The active-site Proton donor/acceptor is the Glu152. Glu152 is a binding site for Mn(2+). Residue Asp185 participates in Mn(2+) binding. D-allulose-binding residues include His188, His211, Arg217, and Glu246. His188, His211, Arg217, and Glu246 together coordinate D-fructose. His211 lines the Mn(2+) pocket. Glu246 acts as the Proton donor/acceptor in catalysis. Residue Glu246 coordinates Mn(2+).

The protein belongs to the hyi family. In terms of assembly, homodimer. Requires Mn(2+) as cofactor.

It catalyses the reaction L-ribulose = L-xylulose. The catalysed reaction is D-ribulose = D-xylulose. It carries out the reaction D-allulose = keto-D-fructose. The enzyme catalyses keto-L-tagatose = keto-L-sorbose. It catalyses the reaction keto-D-tagatose = keto-D-sorbose. Functionally, catalyzes the epimerization of various ketoses at the C(3) position. Exhibits the highest enzymatic activity toward L-ribulose, followed by D-ribulose, D-allulose and D-fructose. Shows lower activity with L-xylulose, L-tagatose, D-xylulose, D-tagatose, L-sorbose, D-sorbose, and weak activity with L-allulose and L-fructose. This Methylomonas sp. (strain DH-1) protein is L-ribulose 3-epimerase.